Consider the following 319-residue polypeptide: Acetyl esterase (319 aa).

An Involved in the stabilization of the negatively charged intermediate by the formation of the oxyanion hole motif is present at residues His91–Gly93. Residues Ser165, Asp262, and His292 contribute to the active site.

Belongs to the 'GDXG' lipolytic enzyme family. In terms of assembly, homodimer. Interacts with MalT and MelA.

It localises to the cytoplasm. In terms of biological role, displays esterase activity towards short chain fatty esters (acyl chain length of up to 8 carbons). Able to hydrolyze triacetylglycerol (triacetin) and tributyrylglycerol (tributyrin), but not trioleylglycerol (triolein) or cholesterol oleate. Negatively regulates MalT activity by antagonizing maltotriose binding. Inhibits MelA galactosidase activity. The sequence is that of Acetyl esterase from Escherichia coli O127:H6 (strain E2348/69 / EPEC).